The following is a 504-amino-acid chain: 13S globulin seed storage protein 2 (504 aa).

The signal sequence occupies residues 1-20; that stretch reads MSTKLILSFSLCLMVLSCSA. 2 disulfide bridges follow: Cys46-Cys79 and Cys122-Cys320. One can recognise a Cupin type-1 1 domain in the interval 51-265; that stretch reads LTASEPSRRV…FRDVDRETIS (215 aa). Disordered regions lie at residues 128 to 158, 214 to 237, and 289 to 314; these read SDSE…GDQH, GQSQ…DDEA, and QDFE…RSNG. 2 stretches are compositionally biased toward basic and acidic residues: residues 144-158 and 218-231; these read RQSE…GDQH and RETR…QSRE. Residues 326-475 enclose the Cupin type-1 2 domain; sequence RNFNTPTNTY…SYDISTKEAY (150 aa).

This sequence belongs to the 11S seed storage protein (globulins) family. In terms of assembly, hexamer; each subunit is composed of an acidic and a basic chain derived from a single precursor and linked by a disulfide bond.

Seed storage protein. The polypeptide is 13S globulin seed storage protein 2 (FA18) (Fagopyrum esculentum (Common buckwheat)).